The chain runs to 573 residues: 2-succinyl-5-enolpyruvyl-6-hydroxy-3-cyclohexene-1-carboxylate synthase (573 aa).

This sequence belongs to the TPP enzyme family. MenD subfamily. Homodimer. Mg(2+) serves as cofactor. Requires Mn(2+) as cofactor. Thiamine diphosphate is required as a cofactor.

The catalysed reaction is isochorismate + 2-oxoglutarate + H(+) = 5-enolpyruvoyl-6-hydroxy-2-succinyl-cyclohex-3-ene-1-carboxylate + CO2. It participates in quinol/quinone metabolism; 1,4-dihydroxy-2-naphthoate biosynthesis; 1,4-dihydroxy-2-naphthoate from chorismate: step 2/7. It functions in the pathway quinol/quinone metabolism; menaquinone biosynthesis. Catalyzes the thiamine diphosphate-dependent decarboxylation of 2-oxoglutarate and the subsequent addition of the resulting succinic semialdehyde-thiamine pyrophosphate anion to isochorismate to yield 2-succinyl-5-enolpyruvyl-6-hydroxy-3-cyclohexene-1-carboxylate (SEPHCHC). This is 2-succinyl-5-enolpyruvyl-6-hydroxy-3-cyclohexene-1-carboxylate synthase from Shewanella baltica (strain OS185).